The primary structure comprises 1526 residues: Ig-like and fibronectin type-III domain-containing protein 2 (1526 aa).

The N-terminal stretch at 1 to 19 (MMRWRLAVLFLTLLASTTG) is a signal peptide. The interval 20–39 (DDTTTKASVSTTTKKGTDGP) is disordered. Over 20-1415 (DDTTTKASVS…RRSASKGSSS (1396 aa)) the chain is Extracellular. A compositionally biased stretch (low complexity) spans 24–33 (TKASVSTTTK). One can recognise an Ig-like C2-type 1 domain in the interval 39 to 170 (PHLTTDDEGF…ELLEFQVEVL (132 aa)). Residues C61 and C154 are joined by a disulfide bond. 12 N-linked (GlcNAc...) asparagine glycosylation sites follow: N87, N143, N158, N181, N414, N427, N475, N489, N533, N590, N617, and N662. In terms of domain architecture, Fibronectin type-III 1 spans 379 to 470 (APRGKRDVDF…VRNIASTNVH (92 aa)). The 92-residue stretch at 587-678 (APGNVTISEL…TAKLFSTLPT (92 aa)) folds into the Fibronectin type-III 2 domain. In terms of domain architecture, WR1 spans 682 to 724 (PLCTIGEPIYMNDGRVMICDAVNPCPNGFRCTGAGSDLSYCCP). Residues N754, N871, N906, N939, N979, N1004, and N1049 are each glycosylated (N-linked (GlcNAc...) asparagine). 2 Fibronectin type-III domains span residues 827-914 (AVRN…TKPA) and 924-1020 (APEK…AQKD). An Ig-like C2-type 2 domain is found at 1116–1207 (ASVTMKKDKI…SRVEASSEVI (92 aa)). An intrachain disulfide couples C1137 to C1190. N1250 is a glycosylation site (N-linked (GlcNAc...) asparagine). Positions 1314-1406 (APSEVSNVRI…SAIPKDSEPR (93 aa)) constitute a Fibronectin type-III 5 domain. A helical membrane pass occupies residues 1416 to 1436 (AFWIVVILVVFGVLIAGLAVL). Residues 1437 to 1526 (SKRRELPYPI…NGMRYAKLET (90 aa)) are Cytoplasmic-facing. The interval 1485–1518 (SATTGTAAATQSEWQSANLEANSTTDNSHEYRNG) is disordered. Positions 1495–1510 (QSEWQSANLEANSTTD) are enriched in polar residues.

Its subcellular location is the cell membrane. This Caenorhabditis elegans protein is Ig-like and fibronectin type-III domain-containing protein 2.